The following is a 478-amino-acid chain: MNRDSFYPAIACFPLLLMLAGCAPMHETRQALSQQTPAAQVDTALPTALKNGWPDSQWWLEYHDNQLTSLINNALQNAPDMQVAEQRIQLAEAQAKAVATQDGPQIDFSADMERQKMSAEGLMGPFALNDPAAGTTGPWYTNGTFGLTAGWHLDIWGKNRAEVTARLGTVKARAAEREQTRQLLAGSVARLYWEWQTQAALNTVLQQIEKEQNTIIATDRQLYQNGITSSVDGVETDINASKTRQQLNDVAGKMKIIEARLNALTNHQTKSLKLKPVALPKVASQLPDELGYSLLARRADLQAAHWYVESSLSTIDAAKAAFYPDINLMAFLQQDALHLSDLFRHSAQQMGVTAGLTLPIFDSGRLNANLDIAKAESNLSIASYNKAVVEAVNDVARAASQVQTLAEKNQHQAQIERDALRVVGLAQARFNAGIIAGSRVSEARIPALRERANGLLLQGQWLDASIRLTGALGGGYKR.

Residues 1–21 (MNRDSFYPAIACFPLLLMLAG) form the signal peptide. Cys-22 carries the N-palmitoyl cysteine lipid modification. Cys-22 carries the S-diacylglycerol cysteine lipid modification.

This sequence belongs to the outer membrane factor (OMF) (TC 1.B.17) family.

The protein resides in the cell outer membrane. Its function is as follows. Could be involved in resistance to puromycin, acriflavine and tetraphenylarsonium chloride. The protein is Putative multidrug resistance outer membrane protein MdtQ (mdtQ) of Shigella flexneri.